The chain runs to 1433 residues: DNA-directed RNA polymerase subunit beta' (1433 aa).

Residues Cys-66, Cys-68, Cys-81, and Cys-84 each contribute to the Zn(2+) site. Mg(2+) contacts are provided by Asp-473, Asp-475, and Asp-477. Zn(2+) is bound by residues Cys-815, Cys-889, Cys-896, and Cys-899.

The protein belongs to the RNA polymerase beta' chain family. The RNAP catalytic core consists of 2 alpha, 1 beta, 1 beta' and 1 omega subunit. When a sigma factor is associated with the core the holoenzyme is formed, which can initiate transcription. It depends on Mg(2+) as a cofactor. The cofactor is Zn(2+).

It catalyses the reaction RNA(n) + a ribonucleoside 5'-triphosphate = RNA(n+1) + diphosphate. Functionally, DNA-dependent RNA polymerase catalyzes the transcription of DNA into RNA using the four ribonucleoside triphosphates as substrates. This chain is DNA-directed RNA polymerase subunit beta', found in Porphyromonas gingivalis (strain ATCC BAA-308 / W83).